A 233-amino-acid polypeptide reads, in one-letter code: Uridylate kinase (233 aa).

9–10 (GS) provides a ligand contact to ATP. Position 43 (G43) interacts with UMP. ATP is bound by residues G44 and R48. UMP contacts are provided by residues D65 and 113–119 (VTPGQTT). Positions 139, 145, and 148 each coordinate ATP.

The protein belongs to the UMP kinase family. As to quaternary structure, homohexamer.

It localises to the cytoplasm. The catalysed reaction is UMP + ATP = UDP + ADP. It functions in the pathway pyrimidine metabolism; CTP biosynthesis via de novo pathway; UDP from UMP (UMPK route): step 1/1. With respect to regulation, inhibited by UTP. Catalyzes the reversible phosphorylation of UMP to UDP. This Methanosarcina acetivorans (strain ATCC 35395 / DSM 2834 / JCM 12185 / C2A) protein is Uridylate kinase.